The sequence spans 132 residues: DNA-directed RNA polymerase subunit omega (132 aa).

The tract at residues 90-109 (SSEAGGVLGTSSEEEGSSFD) is disordered.

This sequence belongs to the RNA polymerase subunit omega family. As to quaternary structure, the RNAP catalytic core consists of 2 alpha, 1 beta, 1 beta' and 1 omega subunit. When a sigma factor is associated with the core the holoenzyme is formed, which can initiate transcription.

The enzyme catalyses RNA(n) + a ribonucleoside 5'-triphosphate = RNA(n+1) + diphosphate. Functionally, promotes RNA polymerase assembly. Latches the N- and C-terminal regions of the beta' subunit thereby facilitating its interaction with the beta and alpha subunits. This chain is DNA-directed RNA polymerase subunit omega, found in Bartonella henselae (strain ATCC 49882 / DSM 28221 / CCUG 30454 / Houston 1) (Rochalimaea henselae).